A 443-amino-acid chain; its full sequence is Probable D-serine dehydratase (443 aa).

The residue at position 118 (lysine 118) is an N6-(pyridoxal phosphate)lysine.

It belongs to the serine/threonine dehydratase family. DsdA subfamily. Requires pyridoxal 5'-phosphate as cofactor.

It carries out the reaction D-serine = pyruvate + NH4(+). This chain is Probable D-serine dehydratase, found in Colwellia psychrerythraea (strain 34H / ATCC BAA-681) (Vibrio psychroerythus).